The chain runs to 115 residues: NADH-ubiquinone oxidoreductase chain 3 (115 aa).

3 helical membrane passes run 4 to 24, 55 to 75, and 84 to 104; these read MLAMLINITLSLCLISLAFWL, FFLVGITFLLLDLEIALLLPL, and MITTTIVSLSLVSILALGLSY.

This sequence belongs to the complex I subunit 3 family. As to quaternary structure, core subunit of respiratory chain NADH dehydrogenase (Complex I) which is composed of 45 different subunits. Interacts with TMEM186. Interacts with TMEM242.

The protein resides in the mitochondrion inner membrane. The catalysed reaction is a ubiquinone + NADH + 5 H(+)(in) = a ubiquinol + NAD(+) + 4 H(+)(out). Functionally, core subunit of the mitochondrial membrane respiratory chain NADH dehydrogenase (Complex I) which catalyzes electron transfer from NADH through the respiratory chain, using ubiquinone as an electron acceptor. Essential for the catalytic activity of complex I. This Reithrodon auritus (Bunny rat) protein is NADH-ubiquinone oxidoreductase chain 3.